Reading from the N-terminus, the 105-residue chain is Multidrug resistance protein EbrA (105 aa).

4 consecutive transmembrane segments (helical) span residues Leu-2–Leu-22, Ala-35–Ile-55, Leu-57–Val-77, and Leu-84–Trp-104.

This sequence belongs to the drug/metabolite transporter (DMT) superfamily. Small multidrug resistance (SMR) (TC 2.A.7.1) family. EbrA/EbrB subfamily. In terms of assembly, the efflux pump is composed of EbrA and EbrB.

The protein resides in the cell membrane. Part of a multidrug efflux pump. Confers resistance to cationic lipophilic dyes such as ethidium bromide, acriflavine, pyronine Y and safranin O. The efflux is probably coupled to an influx of protons. This chain is Multidrug resistance protein EbrA (ebrA), found in Bacillus subtilis (strain 168).